Consider the following 191-residue polypeptide: Dirigent protein 3 (191 aa).

Residues 1-21 (MSKLILILTAQILLLTATALA) form the signal peptide. 2 N-linked (GlcNAc...) asparagine glycosylation sites follow: N96 and N131.

It belongs to the plant dirigent protein family. As to quaternary structure, homodimer.

The protein localises to the secreted. Its subcellular location is the extracellular space. It is found in the apoplast. Dirigent proteins impart stereoselectivity on the phenoxy radical-coupling reaction, yielding optically active lignans from two molecules of coniferyl alcohol in the biosynthesis of lignans, flavonolignans, and alkaloids and thus plays a central role in plant secondary metabolism. The polypeptide is Dirigent protein 3 (DIR3) (Arabidopsis thaliana (Mouse-ear cress)).